The chain runs to 149 residues: Transcriptional repressor NrdR (149 aa).

A zinc finger spans residues 3–34 (CPFCAAVDTKVIDSRLVGDGSQVRRRRQCLEC). The 91-residue stretch at 49–139 (PRVIKSDDIR…VYRSFEDIRE (91 aa)) folds into the ATP-cone domain.

This sequence belongs to the NrdR family. The cofactor is Zn(2+).

Its function is as follows. Negatively regulates transcription of bacterial ribonucleotide reductase nrd genes and operons by binding to NrdR-boxes. The polypeptide is Transcriptional repressor NrdR (Photorhabdus laumondii subsp. laumondii (strain DSM 15139 / CIP 105565 / TT01) (Photorhabdus luminescens subsp. laumondii)).